Consider the following 206-residue polypeptide: Small ribosomal subunit protein uS4 (206 aa).

In terms of domain architecture, S4 RNA-binding spans 96 to 157 (QRLDNVVYRM…KAKKQARIGA (62 aa)).

Belongs to the universal ribosomal protein uS4 family. As to quaternary structure, part of the 30S ribosomal subunit. Contacts protein S5. The interaction surface between S4 and S5 is involved in control of translational fidelity.

Functionally, one of the primary rRNA binding proteins, it binds directly to 16S rRNA where it nucleates assembly of the body of the 30S subunit. With S5 and S12 plays an important role in translational accuracy. The chain is Small ribosomal subunit protein uS4 from Idiomarina loihiensis (strain ATCC BAA-735 / DSM 15497 / L2-TR).